The following is a 312-amino-acid chain: Prephenate dehydratase (312 aa).

Positions 3–194 (GIAYLGPEGT…ARTRFVLVGR (192 aa)) constitute a Prephenate dehydratase domain. Residues 208 to 285 (SVVLQLDNVP…ADVRYLGSWP (78 aa)) form the ACT domain. The disordered stretch occupies residues 291–312 (GAAPPPMDESASWLEGLREGRP).

Homodimer.

The catalysed reaction is prephenate + H(+) = 3-phenylpyruvate + CO2 + H2O. It participates in amino-acid biosynthesis; L-phenylalanine biosynthesis; phenylpyruvate from prephenate: step 1/1. The protein is Prephenate dehydratase (pheA) of Mycolicibacterium vanbaalenii (strain DSM 7251 / JCM 13017 / BCRC 16820 / KCTC 9966 / NRRL B-24157 / PYR-1) (Mycobacterium vanbaalenii).